Here is a 584-residue protein sequence, read N- to C-terminus: uncharacterized protein (584 aa).

4 disordered regions span residues 151–188, 222–243, 399–418, and 433–584; these read EHPP…DNDL, KRKE…SRAN, SETP…PPDF, and MQPS…AKSD. Residues 159 to 188 are compositionally biased toward basic and acidic residues; that stretch reads TSSEKTRSENRERKKRWREQNEERNKDNDL. Positions 231-243 are enriched in low complexity; the sequence is LSQNQSSNASRAN. 5 stretches are compositionally biased toward polar residues: residues 399–409, 433–453, 483–500, 511–531, and 572–584; these read SETPTPVSGNG, MQPS…SSEM, NAVT…SGSP, NYSQ…SSLP, and QRSS…AKSD.

This is an uncharacterized protein from Schizosaccharomyces pombe (strain 972 / ATCC 24843) (Fission yeast).